The sequence spans 375 residues: F-box/kelch-repeat protein At4g39580 (375 aa).

The F-box domain maps to 20–66; sequence PTTNLFLPDDILLSSLSRISRLYYPTFSLVSKSFRSLIASPELYQTR. Kelch repeat units follow at residues 132–178, 179–225, and 229–269; these read NIYA…VLDG, KIYV…KSVG, and KYHL…VINN.

The polypeptide is F-box/kelch-repeat protein At4g39580 (Arabidopsis thaliana (Mouse-ear cress)).